A 403-amino-acid polypeptide reads, in one-letter code: Cytoplasmic tRNA 2-thiolation protein 2 (403 aa).

This sequence belongs to the CTU2/NCS2 family.

It is found in the cytoplasm. It functions in the pathway tRNA modification; 5-methoxycarbonylmethyl-2-thiouridine-tRNA biosynthesis. Plays a central role in 2-thiolation of mcm(5)S(2)U at tRNA wobble positions of tRNA(Lys), tRNA(Glu) and tRNA(Gln). May act by forming a heterodimer with NCS6/CTU1 that ligates sulfur from thiocarboxylated URM1 onto the uridine of tRNAs at wobble position. The protein is Cytoplasmic tRNA 2-thiolation protein 2 of Drosophila ananassae (Fruit fly).